The sequence spans 332 residues: L-lactate dehydrogenase A chain (332 aa).

Residues 29–57 (GMVG…MEDK) and Arg-99 each bind NAD(+). Substrate is bound by residues Arg-106, Asn-138, and Arg-169. Position 138 (Asn-138) interacts with NAD(+). His-193 serves as the catalytic Proton acceptor. Thr-248 contacts substrate.

This sequence belongs to the LDH/MDH superfamily. LDH family. As to quaternary structure, homotetramer.

Its subcellular location is the cytoplasm. The enzyme catalyses (S)-lactate + NAD(+) = pyruvate + NADH + H(+). It functions in the pathway fermentation; pyruvate fermentation to lactate; (S)-lactate from pyruvate: step 1/1. In terms of biological role, interconverts simultaneously and stereospecifically pyruvate and lactate with concomitant interconversion of NADH and NAD(+). This Sphyraena lucasana (Lucas barracuda) protein is L-lactate dehydrogenase A chain (ldha).